Here is a 144-residue protein sequence, read N- to C-terminus: 3-hydroxyacyl-[acyl-carrier-protein] dehydratase FabZ (144 aa).

His-48 is a catalytic residue.

This sequence belongs to the thioester dehydratase family. FabZ subfamily.

Its subcellular location is the cytoplasm. It carries out the reaction a (3R)-hydroxyacyl-[ACP] = a (2E)-enoyl-[ACP] + H2O. Involved in unsaturated fatty acids biosynthesis. Catalyzes the dehydration of short chain beta-hydroxyacyl-ACPs and long chain saturated and unsaturated beta-hydroxyacyl-ACPs. The protein is 3-hydroxyacyl-[acyl-carrier-protein] dehydratase FabZ of Bacillus anthracis (strain A0248).